The following is a 151-amino-acid chain: MDNKKGGLFKIAKKLRNGTKVWARAGYFKCKLLKITTTGAPCLFAGRLKRRYDATFQSMVEIFRQEIANDVTCGRVETALLYFVNKFFRSVGCFGKGKEREVKTDRQRDTGSGEQRIRLERDTETLYQSQLRINQVNGWMSGWMQISLILQ.

The protein localises to the cytoplasm. Functionally, has a role in meiosis. This is Meiotically up-regulated gene 114 protein (mug114) from Schizosaccharomyces pombe (strain 972 / ATCC 24843) (Fission yeast).